An 849-amino-acid polypeptide reads, in one-letter code: Glycogen phosphorylase (849 aa).

At Lys-679 the chain carries N6-(pyridoxal phosphate)lysine.

The protein belongs to the glycogen phosphorylase family. It depends on pyridoxal 5'-phosphate as a cofactor.

The catalysed reaction is [(1-&gt;4)-alpha-D-glucosyl](n) + phosphate = [(1-&gt;4)-alpha-D-glucosyl](n-1) + alpha-D-glucose 1-phosphate. Functionally, phosphorylase is an important allosteric enzyme in carbohydrate metabolism. Enzymes from different sources differ in their regulatory mechanisms and in their natural substrates. However, all known phosphorylases share catalytic and structural properties. The protein is Glycogen phosphorylase (glgP) of Synechocystis sp. (strain ATCC 27184 / PCC 6803 / Kazusa).